The following is a 686-amino-acid chain: ATP-dependent DNA helicase RecG (686 aa).

Positions 50–149 (TVIDLNQAED…GTQTQENADV (100 aa)) are wedge domain. The Helicase ATP-binding domain maps to 279–439 (DLKAPIRMHR…VFGEMDVSSI (161 aa)). 292–299 (GDVGSGKT) provides a ligand contact to ATP. The short motif at 392–395 (DEQH) is the DEAH box element. A Helicase C-terminal domain is found at 462–618 (VLMQMTSELK…GFELSERDLE (157 aa)).

This sequence belongs to the helicase family. RecG subfamily. In terms of assembly, monomer.

The catalysed reaction is Couples ATP hydrolysis with the unwinding of duplex DNA by translocating in the 3'-5' direction.. It carries out the reaction ATP + H2O = ADP + phosphate + H(+). Functionally, plays a critical role in recombination and DNA repair. Helps process Holliday junction intermediates to mature products by catalyzing branch migration. Has replication fork regression activity, unwinds stalled or blocked replication forks to make a HJ that can be resolved. Has a DNA unwinding activity characteristic of a DNA helicase with 3'-5' polarity. The polypeptide is ATP-dependent DNA helicase RecG (Staphylococcus aureus (strain NCTC 8325 / PS 47)).